The primary structure comprises 317 residues: Olfactory receptor 6P1 (317 aa).

Over 1-25 the chain is Extracellular; it reads MRNLSGGHVEEFVLVGFPTTPPLQL. N-linked (GlcNAc...) asparagine glycosylation is present at asparagine 3. A helical membrane pass occupies residues 26–46; that stretch reads LLFVLFFAIYLLTLLENALIV. Topologically, residues 47–54 are cytoplasmic; the sequence is FTIWLAPS. Residues 55-75 traverse the membrane as a helical segment; that stretch reads LHRPMYFFLGHLSFLELWYIN. Residues 76–99 are Extracellular-facing; sequence VTIPRLLAAFLTQDGRVSYVGCMT. The cysteines at positions 97 and 189 are disulfide-linked. Residues 100–120 form a helical membrane-spanning segment; the sequence is QLYFFIALACTECVLLAVMAY. Residues 121–139 lie on the Cytoplasmic side of the membrane; that stretch reads DRYLAICGPLLYPSLMPSS. The helical transmembrane segment at 140–160 threads the bilayer; sequence LATRLAAASWGSGFFSSMMKL. At 161 to 197 the chain is on the extracellular side; the sequence is LFISQLSYCGPNIINHFFCDISPLLNLTCSDKEQAEL. Residue asparagine 186 is glycosylated (N-linked (GlcNAc...) asparagine). Residues 198-217 form a helical membrane-spanning segment; the sequence is VDFLLALVMILLPLLAVVSS. Residues 218-237 lie on the Cytoplasmic side of the membrane; that stretch reads YTAIIAAILRIPTSRGRHKA. A helical transmembrane segment spans residues 238–258; that stretch reads FSTCAAHLAVVVIYYSSTLFT. Residues 259–271 are Extracellular-facing; the sequence is YARPRAMYTFNHN. A helical transmembrane segment spans residues 272 to 292; it reads KIISVLYTIIVPFFNPAIYCL. Residues 293–317 are Cytoplasmic-facing; sequence RNKEVKEAFRKTVMGRCHYPRDVQD.

Belongs to the G-protein coupled receptor 1 family.

It localises to the cell membrane. Its function is as follows. Odorant receptor. The sequence is that of Olfactory receptor 6P1 (OR6P1) from Homo sapiens (Human).